The sequence spans 158 residues: Transcriptional regulatory protein DoeX (158 aa).

Positions 3 to 64 constitute an HTH asnC-type domain; that stretch reads LDRYDLKILE…RLNTDVLVKR (62 aa). Residues 22 to 41 constitute a DNA-binding region (H-T-H motif); that stretch reads KSKLAEAINLSVSPCWERVR.

Its subcellular location is the cytoplasm. Acts as a transcriptional regulator. It binds DNA specifically to a fragment from the doeA promoter region. The protein is Transcriptional regulatory protein DoeX (doeX) of Halomonas elongata (strain ATCC 33173 / DSM 2581 / NBRC 15536 / NCIMB 2198 / 1H9).